The following is a 345-amino-acid chain: MGVCGYLFLPWKCLVVVSLRLLFLVPTGVPVRSGDATFPKAMDNVTVRQGESATLRCTIDDRVTRVAWLNRSTILYAGNDKWSIDPRVIILVNTPTQYSIMIQNVDVYDEGPYTCSVQTDNHPKTSRVHLIVQVPPQIMNISSDITVNEGSSVTLLCLAIGRPEPTVTWRHLSVKEGQGFVSEDEYLEISDIKRDQSGEYECSALNDVAAPDVRKVKITVNYPPYISKAKNTGVSVGQKGILSCEASAVPMAEFQWFKEETRLATGLDGMRIENKGRMSTLTFFNVSEKDYGNYTCVATNKLGNTNASITLYGPGAVIDGVNSASRALACLWLSGTLLAHFFIKF.

The signal sequence occupies residues 1 to 27 (MGVCGYLFLPWKCLVVVSLRLLFLVPT). Ig-like C2-type domains are found at residues 39–126 (PKAM…PKTS), 136–219 (PQIM…VKIT), and 223–310 (PPYI…ASIT). N44, N70, and N140 each carry an N-linked (GlcNAc...) asparagine glycan. A disulfide bridge links C57 with C115. Cystine bridges form between C157–C202 and C244–C296. 3 N-linked (GlcNAc...) asparagine glycosylation sites follow: N285, N293, and N306. N322 carries GPI-anchor amidated asparagine lipidation. Positions 323 to 345 (SASRALACLWLSGTLLAHFFIKF) are cleaved as a propeptide — removed in mature form.

It belongs to the immunoglobulin superfamily. IgLON family.

The protein resides in the cell membrane. Functionally, binds opioids in the presence of acidic lipids; probably involved in cell contact. This chain is Opioid-binding protein/cell adhesion molecule (OPCML), found in Homo sapiens (Human).